The chain runs to 280 residues: Putative pyruvate, phosphate dikinase regulatory protein (280 aa).

Residue 152 to 159 coordinates ADP; it reads GVSRTSKS.

Belongs to the pyruvate, phosphate/water dikinase regulatory protein family. PDRP subfamily.

It carries out the reaction N(tele)-phospho-L-histidyl/L-threonyl-[pyruvate, phosphate dikinase] + ADP = N(tele)-phospho-L-histidyl/O-phospho-L-threonyl-[pyruvate, phosphate dikinase] + AMP + H(+). The enzyme catalyses N(tele)-phospho-L-histidyl/O-phospho-L-threonyl-[pyruvate, phosphate dikinase] + phosphate + H(+) = N(tele)-phospho-L-histidyl/L-threonyl-[pyruvate, phosphate dikinase] + diphosphate. Bifunctional serine/threonine kinase and phosphorylase involved in the regulation of the pyruvate, phosphate dikinase (PPDK) by catalyzing its phosphorylation/dephosphorylation. In Anaplasma phagocytophilum (strain HZ), this protein is Putative pyruvate, phosphate dikinase regulatory protein.